The following is a 130-amino-acid chain: Phosphoribosyl-AMP cyclohydrolase (130 aa).

Asp-77 contributes to the Mg(2+) binding site. Position 78 (Cys-78) interacts with Zn(2+). 2 residues coordinate Mg(2+): Asp-79 and Asp-81. Residues Cys-95 and Cys-102 each contribute to the Zn(2+) site.

It belongs to the PRA-CH family. In terms of assembly, homodimer. Requires Mg(2+) as cofactor. Zn(2+) serves as cofactor.

It localises to the cytoplasm. It catalyses the reaction 1-(5-phospho-beta-D-ribosyl)-5'-AMP + H2O = 1-(5-phospho-beta-D-ribosyl)-5-[(5-phospho-beta-D-ribosylamino)methylideneamino]imidazole-4-carboxamide. The protein operates within amino-acid biosynthesis; L-histidine biosynthesis; L-histidine from 5-phospho-alpha-D-ribose 1-diphosphate: step 3/9. Catalyzes the hydrolysis of the adenine ring of phosphoribosyl-AMP. The polypeptide is Phosphoribosyl-AMP cyclohydrolase (Pseudomonas putida (strain GB-1)).